Reading from the N-terminus, the 291-residue chain is E3 ubiquitin-protein ligase MARCHF8 (291 aa).

The tract at residues 22–72 (YRSKTKEKEREEQNEKTLGHFMSHSSNISKAGSPPSASAPAPVSSFSRTSI) is disordered. The segment covering 25-39 (KTKEKEREEQNEKTL) has biased composition (basic and acidic residues). Residues 50–72 (SKAGSPPSASAPAPVSSFSRTSI) are compositionally biased toward low complexity. The segment at 72-133 (ITPSSQDICR…ELCKYEFIME (62 aa)) adopts an RING-CH-type zinc-finger fold. 8 residues coordinate Zn(2+): Cys80, Cys83, Cys97, Cys99, His107, Cys110, Cys123, and Cys126. The next 2 membrane-spanning stretches (helical) occupy residues 157-177 (CSVT…YVLI) and 197-217 (FWTK…FMYV). Position 253 is a phosphoserine (Ser253).

In terms of assembly, interacts with CD86. In terms of tissue distribution, broadly expressed. Present in immature dendritic cells (at protein level).

The protein localises to the golgi apparatus membrane. Its subcellular location is the endoplasmic reticulum membrane. It is found in the cytoplasmic vesicle membrane. The protein resides in the lysosome membrane. It localises to the early endosome membrane. It carries out the reaction S-ubiquitinyl-[E2 ubiquitin-conjugating enzyme]-L-cysteine + [acceptor protein]-L-lysine = [E2 ubiquitin-conjugating enzyme]-L-cysteine + N(6)-ubiquitinyl-[acceptor protein]-L-lysine.. Its pathway is protein modification; protein ubiquitination. E3 ubiquitin-protein ligase that plays several important roles in innate immunity and adaptive immunity. Mediates ubiquitination of CD86 and MHC class II proteins, such as HLA-DR alpha and beta, and promotes their subsequent endocytosis and sorting to lysosomes via multivesicular bodies. Possesses a very broad antiviral activity by specifically inactivating different viral fusion proteins. Targets and ubiquitinates cytoplasmic lysine residues of viral envelope glycoproteins with single transmembrane domains leading to their lysosomal degradation. Therefore, shows broad-spectrum inhibition against many viruses including retroviruses, rhabdoviruses, arenaviruses, sarbecoviruses or influenzaviruses. Strongly blocks human immunodeficiency virus type 1 envelope glycoprotein incorporation into virions by down-regulating its cell surface expression. Also blocks ebola virus glycoprotein/GP incorporation via surface down-regulation. Mediates 'Lys-63'-linked polyubiquitination of influenza M2 to target it to lysosome for degradation. Mediates the regulation of constitutive ubiquitination and trafficking of the viral restriction factor BST2 within the endocytic pathway. Plays a role in maintenance of immune tolerance to self by promoting the turnover and proteasomal degradation of PD-L1/CD274 via ubiquitination. Catalyzes the 'Lys-63'-linked polyubiquitylation of cGAS thereby inhibiting its DNA binding ability and impairing its antiviral innate immunity. Negatively regulates IL7-mediated T-cell homeostasis by mediating 'Lys-27'-linked polyubiquitination of IL7R, leading to its lysosomal degradation. In terms of biological role, (Microbial infection) Mediates 'Lys-63'-linked polyubiquitination of hepatitis C virus/HCV protein NS2 which allows its binding to HGS, an ESCRT-0 complex component, and this interaction is essential for HCV envelopment. The sequence is that of E3 ubiquitin-protein ligase MARCHF8 from Homo sapiens (Human).